The chain runs to 276 residues: Putative pyruvate, phosphate dikinase regulatory protein (276 aa).

153-160 (GISRTSKT) provides a ligand contact to ADP.

Belongs to the pyruvate, phosphate/water dikinase regulatory protein family. PDRP subfamily.

The catalysed reaction is N(tele)-phospho-L-histidyl/L-threonyl-[pyruvate, phosphate dikinase] + ADP = N(tele)-phospho-L-histidyl/O-phospho-L-threonyl-[pyruvate, phosphate dikinase] + AMP + H(+). It catalyses the reaction N(tele)-phospho-L-histidyl/O-phospho-L-threonyl-[pyruvate, phosphate dikinase] + phosphate + H(+) = N(tele)-phospho-L-histidyl/L-threonyl-[pyruvate, phosphate dikinase] + diphosphate. Bifunctional serine/threonine kinase and phosphorylase involved in the regulation of the pyruvate, phosphate dikinase (PPDK) by catalyzing its phosphorylation/dephosphorylation. The chain is Putative pyruvate, phosphate dikinase regulatory protein from Brucella anthropi (strain ATCC 49188 / DSM 6882 / CCUG 24695 / JCM 21032 / LMG 3331 / NBRC 15819 / NCTC 12168 / Alc 37) (Ochrobactrum anthropi).